Consider the following 461-residue polypeptide: Argininosuccinate lyase (461 aa).

The protein belongs to the lyase 1 family. Argininosuccinate lyase subfamily.

The protein localises to the cytoplasm. The catalysed reaction is 2-(N(omega)-L-arginino)succinate = fumarate + L-arginine. It functions in the pathway amino-acid biosynthesis; L-arginine biosynthesis; L-arginine from L-ornithine and carbamoyl phosphate: step 3/3. This Syntrophotalea carbinolica (strain DSM 2380 / NBRC 103641 / GraBd1) (Pelobacter carbinolicus) protein is Argininosuccinate lyase.